Consider the following 336-residue polypeptide: tRNA N6-adenosine threonylcarbamoyltransferase (336 aa).

2 residues coordinate Fe cation: histidine 111 and histidine 115. Residues leucine 134–glycine 138, aspartate 167, glycine 180, and asparagine 271 contribute to the substrate site. Aspartate 299 contributes to the Fe cation binding site.

This sequence belongs to the KAE1 / TsaD family. The cofactor is Fe(2+).

Its subcellular location is the cytoplasm. The catalysed reaction is L-threonylcarbamoyladenylate + adenosine(37) in tRNA = N(6)-L-threonylcarbamoyladenosine(37) in tRNA + AMP + H(+). Functionally, required for the formation of a threonylcarbamoyl group on adenosine at position 37 (t(6)A37) in tRNAs that read codons beginning with adenine. Is involved in the transfer of the threonylcarbamoyl moiety of threonylcarbamoyl-AMP (TC-AMP) to the N6 group of A37, together with TsaE and TsaB. TsaD likely plays a direct catalytic role in this reaction. The chain is tRNA N6-adenosine threonylcarbamoyltransferase from Thioalkalivibrio sulfidiphilus (strain HL-EbGR7).